Consider the following 113-residue polypeptide: UPF0102 protein CHU_0465 (113 aa).

It belongs to the UPF0102 family.

The chain is UPF0102 protein CHU_0465 from Cytophaga hutchinsonii (strain ATCC 33406 / DSM 1761 / CIP 103989 / NBRC 15051 / NCIMB 9469 / D465).